The primary structure comprises 1212 residues: Periplasmic/secreted acid trehalase ATH1 (1212 aa).

At 1–82 (MGFKDKILFW…STRVKIRRQN (82 aa)) the chain is on the cytoplasmic side. Residues 83 to 103 (ILNTTLILGMLIALVIWTAIL) traverse the membrane as a helical segment. Over 104–1212 (STNSYFSSSL…ATIREIVLQE (1109 aa)) the chain is Periplasmic. Residues Asn-243, Asn-275, Asn-296, Asn-362, Asn-414, Asn-428, and Asn-521 are each glycosylated (N-linked (GlcNAc...) asparagine). Position 546 to 547 (546 to 547 (WD)) interacts with substrate. N-linked (GlcNAc...) asparagine glycans are attached at residues Asn-572, Asn-601, Asn-661, and Asn-671. Glu-677 functions as the Proton donor in the catalytic mechanism. 2 N-linked (GlcNAc...) asparagine glycosylation sites follow: Asn-729 and Asn-738. 744 to 745 (KQ) serves as a coordination point for substrate. N-linked (GlcNAc...) asparagine glycans are attached at residues Asn-912, Asn-938, Asn-993, Asn-1011, Asn-1033, Asn-1052, Asn-1070, Asn-1097, and Asn-1165.

This sequence belongs to the glycosyl hydrolase 65 family. As to quaternary structure, homodimer.

Its subcellular location is the secreted. The protein localises to the periplasm. It localises to the membrane. The catalysed reaction is alpha,alpha-trehalose + H2O = alpha-D-glucose + beta-D-glucose. Periplasmic/secreted acid trehalase that catalyzes hydrolysis of the disaccharide trehalose and required for growth on trehalose as carbon source. Growth on trehalose is not restricted to respiration. The sequence is that of Periplasmic/secreted acid trehalase ATH1 from Candida glabrata (Yeast).